Reading from the N-terminus, the 737-residue chain is Exostosin-1c (737 aa).

The Cytoplasmic portion of the chain corresponds to 1 to 6 (MQARKK). A helical; Signal-anchor for type II membrane protein membrane pass occupies residues 7–27 (YVLLGLCTCCWILLYYWAGLQ). At 28–737 (ERLLGLITHR…RKRYKDLERV (710 aa)) the chain is on the lumenal side. N-linked (GlcNAc...) asparagine glycosylation is found at Asn194 and Asn322. Positions 432, 540, 556, 557, 558, 644, 645, and 692 each coordinate UDP-N-acetyl-alpha-D-glucosamine. Residue Asp558 coordinates Mn(2+). Cys643 and Cys695 are joined by a disulfide. The active site involves Asp645.

Belongs to the glycosyltransferase 47 family. Mn(2+) is required as a cofactor.

The protein resides in the endoplasmic reticulum membrane. The catalysed reaction is 3-O-{[(1-&gt;4)-beta-D-GlcA-(1-&gt;4)-alpha-D-GlcNAc](n)-(1-&gt;4)-beta-D-GlcA-(1-&gt;3)-beta-D-Gal-(1-&gt;3)-beta-D-Gal-(1-&gt;4)-beta-D-Xyl}-L-seryl-[protein] + UDP-N-acetyl-alpha-D-glucosamine = 3-O-{alpha-D-GlcNAc-[(1-&gt;4)-beta-D-GlcA-(1-&gt;4)-alpha-D-GlcNAc](n)-(1-&gt;4)-beta-D-GlcA-(1-&gt;3)-beta-D-Gal-(1-&gt;3)-beta-D-Gal-(1-&gt;4)-beta-D-Xyl}-L-seryl-[protein] + UDP + H(+). It catalyses the reaction 3-O-{alpha-D-GlcNAc-[(1-&gt;4)-beta-D-GlcA-(1-&gt;4)-alpha-D-GlcNAc](n)-(1-&gt;4)-beta-D-GlcA-(1-&gt;3)-beta-D-Gal-(1-&gt;3)-beta-D-Gal-(1-&gt;4)-beta-D-Xyl}-L-seryl-[protein] + UDP-alpha-D-glucuronate = 3-O-{[(1-&gt;4)-beta-D-GlcA-(1-&gt;4)-alpha-D-GlcNAc](n+1)-(1-&gt;4)-beta-D-GlcA-(1-&gt;3)-beta-D-Gal-(1-&gt;3)-beta-D-Gal-(1-&gt;4)-beta-D-Xyl}-L-seryl-[protein] + UDP + H(+). It participates in protein modification; protein glycosylation. Glycosyltransferase required for the biosynthesis of heparan-sulfate. The chain is Exostosin-1c (ext1c) from Danio rerio (Zebrafish).